A 247-amino-acid chain; its full sequence is Pyridoxine 5'-phosphate synthase (247 aa).

Residue Asn-12 coordinates 3-amino-2-oxopropyl phosphate. 14–15 (DH) serves as a coordination point for 1-deoxy-D-xylulose 5-phosphate. Residue Arg-23 participates in 3-amino-2-oxopropyl phosphate binding. His-48 acts as the Proton acceptor in catalysis. 1-deoxy-D-xylulose 5-phosphate contacts are provided by Arg-50 and His-55. The active-site Proton acceptor is the Glu-75. Thr-105 serves as a coordination point for 1-deoxy-D-xylulose 5-phosphate. The active-site Proton donor is the His-196. Residues Gly-197 and 218–219 (GH) each bind 3-amino-2-oxopropyl phosphate.

The protein belongs to the PNP synthase family. In terms of assembly, homooctamer; tetramer of dimers.

Its subcellular location is the cytoplasm. It carries out the reaction 3-amino-2-oxopropyl phosphate + 1-deoxy-D-xylulose 5-phosphate = pyridoxine 5'-phosphate + phosphate + 2 H2O + H(+). It participates in cofactor biosynthesis; pyridoxine 5'-phosphate biosynthesis; pyridoxine 5'-phosphate from D-erythrose 4-phosphate: step 5/5. Functionally, catalyzes the complicated ring closure reaction between the two acyclic compounds 1-deoxy-D-xylulose-5-phosphate (DXP) and 3-amino-2-oxopropyl phosphate (1-amino-acetone-3-phosphate or AAP) to form pyridoxine 5'-phosphate (PNP) and inorganic phosphate. In Pseudomonas fluorescens (strain SBW25), this protein is Pyridoxine 5'-phosphate synthase.